The following is a 380-amino-acid chain: Alcohol dehydrogenase-like 4 (380 aa).

The Zn(2+) site is built by C47, T49, H70, C100, C103, C106, C114, and C180. Positions 49 and 70 each coordinate an alcohol. T49 serves as a coordination point for NAD(+). NAD(+) is bound by residues 205–210 (GLGAVG), D229, K234, 298–300 (LGV), F325, and R375.

It belongs to the zinc-containing alcohol dehydrogenase family. Class-III subfamily. As to quaternary structure, homodimer. It depends on Zn(2+) as a cofactor.

It is found in the cytoplasm. It catalyses the reaction a primary alcohol + NAD(+) = an aldehyde + NADH + H(+). It carries out the reaction a secondary alcohol + NAD(+) = a ketone + NADH + H(+). The sequence is that of Alcohol dehydrogenase-like 4 from Arabidopsis thaliana (Mouse-ear cress).